Reading from the N-terminus, the 218-residue chain is Uracil-DNA glycosylase (218 aa).

The active-site Proton acceptor is D59.

This sequence belongs to the uracil-DNA glycosylase (UDG) superfamily. UNG family.

The protein localises to the cytoplasm. The enzyme catalyses Hydrolyzes single-stranded DNA or mismatched double-stranded DNA and polynucleotides, releasing free uracil.. In terms of biological role, excises uracil residues from the DNA which can arise as a result of misincorporation of dUMP residues by DNA polymerase or due to deamination of cytosine. In Staphylococcus aureus (strain MSSA476), this protein is Uracil-DNA glycosylase.